A 154-amino-acid polypeptide reads, in one-letter code: SsrA-binding protein (154 aa).

It belongs to the SmpB family.

It localises to the cytoplasm. Functionally, required for rescue of stalled ribosomes mediated by trans-translation. Binds to transfer-messenger RNA (tmRNA), required for stable association of tmRNA with ribosomes. tmRNA and SmpB together mimic tRNA shape, replacing the anticodon stem-loop with SmpB. tmRNA is encoded by the ssrA gene; the 2 termini fold to resemble tRNA(Ala) and it encodes a 'tag peptide', a short internal open reading frame. During trans-translation Ala-aminoacylated tmRNA acts like a tRNA, entering the A-site of stalled ribosomes, displacing the stalled mRNA. The ribosome then switches to translate the ORF on the tmRNA; the nascent peptide is terminated with the 'tag peptide' encoded by the tmRNA and targeted for degradation. The ribosome is freed to recommence translation, which seems to be the essential function of trans-translation. The sequence is that of SsrA-binding protein from Solidesulfovibrio magneticus (strain ATCC 700980 / DSM 13731 / RS-1) (Desulfovibrio magneticus).